We begin with the raw amino-acid sequence, 183 residues long: uncharacterized protein (183 aa).

A helical transmembrane segment spans residues 7 to 23 (LFFTALCFGLTGCIAPP).

The protein resides in the membrane. This is an uncharacterized protein from Haemophilus influenzae (strain ATCC 51907 / DSM 11121 / KW20 / Rd).